The following is a 949-amino-acid chain: Sensor histidine kinase RcsC (949 aa).

At 1-19 (MKYLASFRTTLKASRYMFR) the chain is on the cytoplasmic side. The helical transmembrane segment at 20–41 (ALALVLWLLIAFSSVFYIVNAL) threads the bilayer. The Periplasmic segment spans residues 42-313 (HQRESEIRQE…PVDKVLERIR (272 aa)). A helical transmembrane segment spans residues 314-335 (MLILNAILLNVLAGAALFTLAR). Over 336-949 (MYERRIFIPA…AERVRKSRDS (614 aa)) the chain is Cytoplasmic. Positions 357–425 (QFNRKIVASA…VLTSNNTNLQ (69 aa)) constitute a PAS domain. In terms of domain architecture, Histidine kinase spans 476-692 (TVSHELRTPL…QFTVRIPLYG (217 aa)). H479 carries the phosphohistidine; by autocatalysis modification. Residues 705 to 805 (SGKRCWLAVR…ARIYLIEMES (101 aa)) enclose the ABL domain. The 115-residue stretch at 826–940 (MILVVDDHPI…VIKQTLTLYA (115 aa)) folds into the Response regulatory domain. 4-aspartylphosphate is present on D875.

This sequence belongs to the RcsC family. As to quaternary structure, interacts with RcsD. In terms of processing, autophosphorylated. Activation probably requires a transfer of a phosphate group from a His in the transmitter domain to an Asp in the receiver domain.

It localises to the cell inner membrane. It catalyses the reaction ATP + protein L-histidine = ADP + protein N-phospho-L-histidine.. Its activity is regulated as follows. The Rcs phosphorelay may be activated by RcsF. DjlA, LolA and OmpG might act as a regulator of the phosphorelay. Activity is probably up-regulated by YmgA/AriR, and possibly down-regulated by YcgZ, all 3 are connector proteins providing additional signal input into signaling system. Its function is as follows. Component of the Rcs signaling system, which controls transcription of numerous genes. RcsC functions as a membrane-associated protein kinase that phosphorylates RcsD in response to environmental signals. The phosphoryl group is then transferred to the response regulator RcsB. RcsC also has phosphatase activity. The system controls expression of genes involved in colanic acid capsule synthesis, biofilm formation and cell division. This Escherichia coli (strain K12) protein is Sensor histidine kinase RcsC.